The primary structure comprises 655 residues: tRNA-guanine(15) transglycosylase (655 aa).

Catalysis depends on D89, which acts as the Nucleophile. Substrate is bound by residues D124 and A195. C281, C283, and C286 together coordinate Zn(2+). Residues K577–K652 enclose the PUA domain.

The protein belongs to the archaeosine tRNA-ribosyltransferase family. Zn(2+) is required as a cofactor.

It carries out the reaction guanosine(15) in tRNA + 7-cyano-7-deazaguanine = 7-cyano-7-carbaguanosine(15) in tRNA + guanine. It participates in tRNA modification; archaeosine-tRNA biosynthesis. Exchanges the guanine residue with 7-cyano-7-deazaguanine (preQ0) at position 15 in the dihydrouridine loop (D-loop) of archaeal tRNAs. Can also utilize guanine as substrate. This chain is tRNA-guanine(15) transglycosylase, found in Methanocaldococcus jannaschii (strain ATCC 43067 / DSM 2661 / JAL-1 / JCM 10045 / NBRC 100440) (Methanococcus jannaschii).